A 107-amino-acid polypeptide reads, in one-letter code: Putative septation protein SpoVG (107 aa).

The disordered stretch occupies residues 82–107 (ETDEVIPDKNAQPSSDSEDNGSEEEA). Residues 97-107 (DSEDNGSEEEA) show a composition bias toward acidic residues.

It belongs to the SpoVG family.

Functionally, could be involved in septation. The polypeptide is Putative septation protein SpoVG (Staphylococcus carnosus (strain TM300)).